The primary structure comprises 190 residues: uncharacterized protein (190 aa).

4 helical membrane-spanning segments follow: residues 15–35 (LVMS…VLAI), 58–78 (FSSF…GVLI), 94–114 (FFSA…YFAF), and 148–168 (FLFF…SFFV).

It is found in the membrane. This is an uncharacterized protein from Saccharomyces cerevisiae (strain ATCC 204508 / S288c) (Baker's yeast).